Reading from the N-terminus, the 212-residue chain is Octanoyltransferase (212 aa).

Positions 31 to 209 constitute a BPL/LPL catalytic domain; the sequence is AETQDEIWLV…HFANLLGYNI (179 aa). Substrate is bound by residues 70-77, 138-140, and 151-153; these read RGGQITYH, SLG, and GLA. The active-site Acyl-thioester intermediate is the Cys-169.

Belongs to the LipB family.

The protein resides in the cytoplasm. The enzyme catalyses octanoyl-[ACP] + L-lysyl-[protein] = N(6)-octanoyl-L-lysyl-[protein] + holo-[ACP] + H(+). The protein operates within protein modification; protein lipoylation via endogenous pathway; protein N(6)-(lipoyl)lysine from octanoyl-[acyl-carrier-protein]: step 1/2. In terms of biological role, catalyzes the transfer of endogenously produced octanoic acid from octanoyl-acyl-carrier-protein onto the lipoyl domains of lipoate-dependent enzymes. Lipoyl-ACP can also act as a substrate although octanoyl-ACP is likely to be the physiological substrate. In Haemophilus influenzae (strain ATCC 51907 / DSM 11121 / KW20 / Rd), this protein is Octanoyltransferase.